The chain runs to 89 residues: MQALFIKISGRVHGVGFRYFTYKLANKMKIKGYVRNAEDGSVEIHAEAPEEILVEFLKAVSIGPPMATVISVKYERVAGQNFTSFDIVP.

The 87-residue stretch at 3–89 (ALFIKISGRV…QNFTSFDIVP (87 aa)) folds into the Acylphosphatase-like domain. Catalysis depends on residues Arg18 and Asn36.

It belongs to the acylphosphatase family.

It carries out the reaction an acyl phosphate + H2O = a carboxylate + phosphate + H(+). In Pseudothermotoga lettingae (strain ATCC BAA-301 / DSM 14385 / NBRC 107922 / TMO) (Thermotoga lettingae), this protein is Acylphosphatase (acyP).